Reading from the N-terminus, the 218-residue chain is Very-long-chain (3R)-3-hydroxyacyl-CoA dehydratase hpo-8 (218 aa).

The next 5 helical transmembrane spans lie at Ile15–Trp35, Phe44–Leu64, Ile86–Trp106, Leu137–Leu157, and Met176–Pro196. Active-site residues include Tyr142 and Glu149.

It belongs to the very long-chain fatty acids dehydratase HACD family.

Its subcellular location is the membrane. It catalyses the reaction a very-long-chain (3R)-3-hydroxyacyl-CoA = a very-long-chain (2E)-enoyl-CoA + H2O. It functions in the pathway lipid metabolism; fatty acid biosynthesis. In terms of biological role, catalyzes the third of the four reactions of the long-chain fatty acids elongation cycle. This endoplasmic reticulum-bound enzymatic process, allows the addition of two carbons to the chain of long- and very long-chain fatty acids/VLCFAs per cycle. This enzyme catalyzes the dehydration of the 3-hydroxyacyl-CoA intermediate into trans-2,3-enoyl-CoA, within each cycle of fatty acid elongation. Thereby, it participates in the production of VLCFAs of different chain lengths that are involved in multiple biological processes as precursors of membrane lipids and lipid mediators. The sequence is that of Very-long-chain (3R)-3-hydroxyacyl-CoA dehydratase hpo-8 (hpo-8) from Caenorhabditis elegans.